The sequence spans 153 residues: Regulator of sigma D (153 aa).

This sequence belongs to the Rsd/AlgQ family. In terms of assembly, interacts with RpoD.

The protein localises to the cytoplasm. Functionally, binds RpoD and negatively regulates RpoD-mediated transcription activation by preventing the interaction between the primary sigma factor RpoD with the catalytic core of the RNA polymerase and with promoter DNA. May be involved in replacement of the RNA polymerase sigma subunit from RpoD to RpoS during the transition from exponential growth to the stationary phase. This Pectobacterium carotovorum subsp. carotovorum (strain PC1) protein is Regulator of sigma D.